The following is a 569-amino-acid chain: Aspartic proteinase 3 (569 aa).

Positions 1–21 (MKLKTVRSAVLSSLFASQVLG) are cleaved as a signal peptide. The propeptide occupies 22–67 (KIIPAANKRDDDSNSKFVKLPFHKLYGDSLENVGSDKKPEVRLLKR). The 393-residue stretch at 83-475 (YSVDLEVGTP…DLENLEISMA (393 aa)) folds into the Peptidase A1 domain. Asn95 carries an N-linked (GlcNAc...) asparagine glycan. Asp101 is a catalytic residue. N-linked (GlcNAc...) asparagine glycosylation is found at Asn203, Asn232, Asn242, Asn245, Asn299, and Asn358. Asp371 is a catalytic residue. Residues Asn480, Asn522, and Asn532 are each glycosylated (N-linked (GlcNAc...) asparagine). The GPI-anchor amidated asparagine moiety is linked to residue Asn548. The propeptide at 549–569 (VGDHIVPSLPLTLISLLFAFI) is removed in mature form.

This sequence belongs to the peptidase A1 family. Consists of an alpha and a beta subunit, which are maintained together by a disulfide bond. In terms of processing, the zymogen is transported to the periplasm, where the propeptide is removed and the enzyme is further subjected to an internal, autocatalytic cleavage to generate an alpha/beta two-subunit endopeptidase. The proteolytic processing at the cell surface is regulated by the environmental pH. Extensively N-glycosylated.

It localises to the cell membrane. The enzyme catalyses Hydrolyzes various precursor proteins with Arg or Lys in P1, and commonly Arg or Lys also in P2. The P3 amino acid is usually non-polar, but otherwise additional basic amino acids are favorable in both non-prime and prime positions.. Cleaves proteins C-terminally to mono- and paired-basic residues. Involved in the shedding of a subset of GPI-anchored plasma membrane proteins from the cell surface, including itself, GAS1 and MSB2. May also play a role in the maturation of GPI-mannoproteins associated with the cell wall. Can process the alpha-mating factor precursor. Required for cell wall integrity. This Saccharomyces cerevisiae (strain ATCC 204508 / S288c) (Baker's yeast) protein is Aspartic proteinase 3 (YPS1).